Reading from the N-terminus, the 393-residue chain is Arginine biosynthesis bifunctional protein ArgJ 3 (393 aa).

Residues Thr148, Lys170, Thr181, Glu260, Asn388, and Thr393 each contribute to the substrate site. Thr181 serves as the catalytic Nucleophile.

This sequence belongs to the ArgJ family. Heterotetramer of two alpha and two beta chains.

It localises to the cytoplasm. The catalysed reaction is N(2)-acetyl-L-ornithine + L-glutamate = N-acetyl-L-glutamate + L-ornithine. It carries out the reaction L-glutamate + acetyl-CoA = N-acetyl-L-glutamate + CoA + H(+). Its pathway is amino-acid biosynthesis; L-arginine biosynthesis; L-ornithine and N-acetyl-L-glutamate from L-glutamate and N(2)-acetyl-L-ornithine (cyclic): step 1/1. The protein operates within amino-acid biosynthesis; L-arginine biosynthesis; N(2)-acetyl-L-ornithine from L-glutamate: step 1/4. Catalyzes two activities which are involved in the cyclic version of arginine biosynthesis: the synthesis of N-acetylglutamate from glutamate and acetyl-CoA as the acetyl donor, and of ornithine by transacetylation between N(2)-acetylornithine and glutamate. This is Arginine biosynthesis bifunctional protein ArgJ 3 from Streptomyces clavuligerus.